We begin with the raw amino-acid sequence, 398 residues long: tRNA-specific 2-thiouridylase MnmA (398 aa).

Residues 20–27 and Leu-46 contribute to the ATP site; that span reads AMSGGVDS. Cys-114 (nucleophile) is an active-site residue. A disulfide bond links Cys-114 and Cys-210. Position 138 (Gly-138) interacts with ATP. Positions 160–162 are interaction with tRNA; sequence RDQ. Cys-210 serves as the catalytic Cysteine persulfide intermediate.

Belongs to the MnmA/TRMU family.

Its subcellular location is the cytoplasm. It carries out the reaction S-sulfanyl-L-cysteinyl-[protein] + uridine(34) in tRNA + AH2 + ATP = 2-thiouridine(34) in tRNA + L-cysteinyl-[protein] + A + AMP + diphosphate + H(+). Functionally, catalyzes the 2-thiolation of uridine at the wobble position (U34) of tRNA, leading to the formation of s(2)U34. The protein is tRNA-specific 2-thiouridylase MnmA of Brucella melitensis biotype 1 (strain ATCC 23456 / CCUG 17765 / NCTC 10094 / 16M).